The primary structure comprises 602 residues: (R)-limonene synthase (602 aa).

The Mg(2+) site is built by aspartate 356, aspartate 360, aspartate 500, threonine 504, and glutamate 508. The short motif at aspartate 356–aspartate 360 is the DDXXD motif element.

Belongs to the terpene synthase family. Mg(2+) is required as a cofactor. The cofactor is Mn(2+).

It carries out the reaction (2E)-geranyl diphosphate = (4R)-limonene + diphosphate. Its function is as follows. Catalyzes the formation of (R)-(+)-limonene, terpinolene, (1R,5S)-(+)-camphene, (1R,5R)-(+)-alpha-pinene, beta-myrcene and traces of alpha-phellandrene. This is (R)-limonene synthase from Lavandula angustifolia (Lavender).